The following is a 135-amino-acid chain: ATP synthase epsilon chain (135 aa).

Belongs to the ATPase epsilon chain family. As to quaternary structure, F-type ATPases have 2 components, CF(1) - the catalytic core - and CF(0) - the membrane proton channel. CF(1) has five subunits: alpha(3), beta(3), gamma(1), delta(1), epsilon(1). CF(0) has three main subunits: a, b and c.

It is found in the cell inner membrane. In terms of biological role, produces ATP from ADP in the presence of a proton gradient across the membrane. In Rhodopseudomonas palustris (strain BisB5), this protein is ATP synthase epsilon chain.